The chain runs to 236 residues: Outer membrane protein P.III (236 aa).

Positions 1 to 22 (MTKQLKLSALFVALLASGTAVA) are cleaved as a signal peptide. 4 tandem repeats follow at residues 69–70 (VP), 71–72 (EP), 73–74 (EP), and 75–76 (AP). Residues 69–76 (VPEPEPAP) form a 4 X 2 AA tandem repeats of X-P region. The 138-residue stretch at 86–223 (YVDETISLSA…RVDVKIRSIV (138 aa)) folds into the OmpA-like domain. An intrachain disulfide couples C185 to C208.

It belongs to the outer membrane OOP (TC 1.B.6) superfamily.

It is found in the cell outer membrane. The polypeptide is Outer membrane protein P.III (Neisseria gonorrhoeae).